The following is a 535-amino-acid chain: EH domain-containing protein 3 (535 aa).

Position 1 is an N-acetylmethionine (methionine 1). One can recognise a Dynamin-type G domain in the interval 55–286 (FDNKPMVLLV…DLFRDIQSLP (232 aa)). The segment at 65–72 (GQYSTGKT) is G1 motif. 65–72 (GQYSTGKT) is an ATP binding site. A G2 motif region spans residues 91-92 (EP). Residues 153–156 (DTPG) are G3 motif. Residues 198–227 (DEFSEVIKALKNHEDKMRVVLNKADQIETQ) adopt a coiled-coil conformation. Residues 219–222 (NKAD) are G4 motif. An ATP-binding site is contributed by lysine 220. Residue isoleucine 243 is a region of interest, G5 motif. Tryptophan 258 contributes to the ATP binding site. Residue lysine 315 forms a Glycyl lysine isopeptide (Lys-Gly) (interchain with G-Cter in SUMO) linkage. 2 positions are modified to phosphoserine: serine 349 and serine 456. Positions 444-532 (DKPMYDEIFY…AHLLPPSKRK (89 aa)) constitute an EH domain. The EF-hand domain maps to 476-511 (LPNSVLGKIWKLADIDKDGMLDDDEFALANHLIKVK). Ca(2+)-binding residues include aspartate 489, aspartate 491, aspartate 493, methionine 495, and glutamate 500. Lysine 511 is covalently cross-linked (Glycyl lysine isopeptide (Lys-Gly) (interchain with G-Cter in SUMO)).

It belongs to the TRAFAC class dynamin-like GTPase superfamily. Dynamin/Fzo/YdjA family. EHD subfamily. Homooligomer, and heterooligomer with EHD1, EHD2 and EHD4, ATP-binding is required for heterooligomerization. Interacts with PACSIN1. Interacts with PACSIN2. Interacts (via EH domain) with MICALL1. Interacts (via EH domain) with RAB11FIP2. Interacts with ANK2. Highly expressed in heart and brain and moderately expressed in kidney, liver, and placenta.

It is found in the recycling endosome membrane. It localises to the cell membrane. The protein resides in the cell projection. Its subcellular location is the cilium membrane. Functionally, ATP- and membrane-binding protein that controls membrane reorganization/tubulation upon ATP hydrolysis. In vitro causes tubulation of endocytic membranes. Binding to phosphatidic acid induces its membrane tubulation activity. Plays a role in endocytic transport. Involved in early endosome to recycling endosome compartment (ERC), retrograde early endosome to Golgi, and endosome to plasma membrane (rapid recycling) protein transport. Involved in the regulation of Golgi maintenance and morphology. Involved in the recycling of internalized D1 dopamine receptor. Plays a role in cardiac protein trafficking probably implicating ANK2. Involved in the ventricular membrane targeting of SLC8A1 and CACNA1C and probably the atrial membrane localization of CACNA1GG and CACNA1H implicated in the regulation of atrial myocyte excitability and cardiac conduction. In conjunction with EHD4 may be involved in endocytic trafficking of KDR/VEGFR2 implicated in control of glomerular function. Involved in the rapid recycling of integrin beta-3 implicated in cell adhesion maintenance. Involved in the unidirectional retrograde dendritic transport of endocytosed BACE1 and in efficient sorting of BACE1 to axons implicating a function in neuronal APP processing. Plays a role in the formation of the ciliary vesicle, an early step in cilium biogenesis; possibly sharing redundant functions with EHD1. This is EH domain-containing protein 3 from Homo sapiens (Human).